A 378-amino-acid chain; its full sequence is Alginate lyase (378 aa).

The first 28 residues, 1–28 (MQTPKLIRPTLLSMAIVSSMAWATGASA), serve as a signal peptide directing secretion. Residues 67–68 (SK), 140–141 (HT), and tyrosine 258 contribute to the substrate site.

This sequence belongs to the polysaccharide lyase 5 family.

The protein resides in the periplasm. It catalyses the reaction Eliminative cleavage of alginate to give oligosaccharides with 4-deoxy-alpha-L-erythro-hex-4-enuronosyl groups at their non-reducing ends and beta-D-mannuronate at their reducing end.. Functionally, catalyzes the depolymerization of alginate by cleaving the beta-1,4 glycosidic bond between two adjacent sugar residues via a beta-elimination mechanism. May serve to degrade mislocalized alginate that is trapped in the periplasmic space. The polypeptide is Alginate lyase (Pseudomonas syringae pv. tomato (strain ATCC BAA-871 / DC3000)).